The primary structure comprises 127 residues: Large ribosomal subunit protein uL22c (127 aa).

This sequence belongs to the universal ribosomal protein uL22 family. Part of the 50S ribosomal subunit.

The protein resides in the plastid. It is found in the chloroplast. In terms of biological role, this protein binds specifically to 23S rRNA. Its function is as follows. The globular domain of the protein is located near the polypeptide exit tunnel on the outside of the subunit, while an extended beta-hairpin is found that lines the wall of the exit tunnel in the center of the 70S ribosome. The polypeptide is Large ribosomal subunit protein uL22c (rpl22) (Acorus calamus var. americanus (American sweet flag)).